The chain runs to 79 residues: Acyl carrier protein (79 aa).

Residues 1–76 (MSLEDDVIAI…DVFTYIKKRQ (76 aa)) form the Carrier domain. Ser-36 bears the O-(pantetheine 4'-phosphoryl)serine mark.

The protein belongs to the acyl carrier protein (ACP) family. 4'-phosphopantetheine is transferred from CoA to a specific serine of apo-ACP by AcpS. This modification is essential for activity because fatty acids are bound in thioester linkage to the sulfhydryl of the prosthetic group.

The protein localises to the cytoplasm. It functions in the pathway lipid metabolism; fatty acid biosynthesis. In terms of biological role, carrier of the growing fatty acid chain in fatty acid biosynthesis. This Chlamydia pneumoniae (Chlamydophila pneumoniae) protein is Acyl carrier protein.